A 143-amino-acid chain; its full sequence is Actinoxanthin (143 aa).

Positions 1–33 (MSLRHMSRRASRFGVVAVASIGLAAAAQSVAFA) are cleaved as a signal peptide. 2 disulfides stabilise this stretch: Cys-69–Cys-78 and Cys-119–Cys-124.

It belongs to the neocarzinostatin family.

Its function is as follows. Binds non-covalently to a chromophore which is the cytotoxic and mutagenic component of the antibiotic. The chromophore binds to DNA as a weak intercalator and causes single- and double-strand breaks. This is Actinoxanthin (axnA) from Streptomyces globisporus.